A 158-amino-acid polypeptide reads, in one-letter code: NAD(P)H-quinone oxidoreductase subunit J, chloroplastic (158 aa).

This sequence belongs to the complex I 30 kDa subunit family. NDH is composed of at least 16 different subunits, 5 of which are encoded in the nucleus.

It is found in the plastid. It localises to the chloroplast thylakoid membrane. It carries out the reaction a plastoquinone + NADH + (n+1) H(+)(in) = a plastoquinol + NAD(+) + n H(+)(out). The enzyme catalyses a plastoquinone + NADPH + (n+1) H(+)(in) = a plastoquinol + NADP(+) + n H(+)(out). Its function is as follows. NDH shuttles electrons from NAD(P)H:plastoquinone, via FMN and iron-sulfur (Fe-S) centers, to quinones in the photosynthetic chain and possibly in a chloroplast respiratory chain. The immediate electron acceptor for the enzyme in this species is believed to be plastoquinone. Couples the redox reaction to proton translocation, and thus conserves the redox energy in a proton gradient. The polypeptide is NAD(P)H-quinone oxidoreductase subunit J, chloroplastic (Vitis vinifera (Grape)).